The following is a 448-amino-acid chain: UDP-glycosyltransferase 79B5 (448 aa).

UDP-alpha-D-glucose-binding positions include Thr261, 320–322, 337–345, and 359–362; these read LEQ, HCGFGSMWE, and LADQ.

It belongs to the UDP-glycosyltransferase family.

The polypeptide is UDP-glycosyltransferase 79B5 (UGT79B5) (Arabidopsis thaliana (Mouse-ear cress)).